We begin with the raw amino-acid sequence, 398 residues long: Enoyl-[acyl-carrier-protein] reductase [NADH] (398 aa).

Residues 48-53, 74-75, 111-112, and 139-140 each bind NAD(+); these read GSSTGY, FE, DA, and LA. Residue Tyr225 coordinates substrate. Tyr235 functions as the Proton donor in the catalytic mechanism. NAD(+) contacts are provided by residues Lys244 and 273–275; that span reads VVT.

This sequence belongs to the TER reductase family. As to quaternary structure, monomer.

It catalyses the reaction a 2,3-saturated acyl-[ACP] + NAD(+) = a (2E)-enoyl-[ACP] + NADH + H(+). The protein operates within lipid metabolism; fatty acid biosynthesis. Involved in the final reduction of the elongation cycle of fatty acid synthesis (FAS II). Catalyzes the reduction of a carbon-carbon double bond in an enoyl moiety that is covalently linked to an acyl carrier protein (ACP). This is Enoyl-[acyl-carrier-protein] reductase [NADH] from Pseudomonas paraeruginosa (strain DSM 24068 / PA7) (Pseudomonas aeruginosa (strain PA7)).